The following is a 90-amino-acid chain: UPF0237 protein MK1213 (90 aa).

Positions 5-79 (VVTVIGADRP…EELGVDVIVQ (75 aa)) constitute an ACT domain.

It belongs to the UPF0237 family.

The polypeptide is UPF0237 protein MK1213 (Methanopyrus kandleri (strain AV19 / DSM 6324 / JCM 9639 / NBRC 100938)).